We begin with the raw amino-acid sequence, 424 residues long: 3-phosphoshikimate 1-carboxyvinyltransferase (424 aa).

3-phosphoshikimate contacts are provided by Lys21, Ser22, and Arg26. Lys21 serves as a coordination point for phosphoenolpyruvate. Residues Gly92 and Arg120 each contribute to the phosphoenolpyruvate site. 3-phosphoshikimate contacts are provided by Ser163, Ser164, Gln165, Ser191, Asp306, and Lys333. Gln165 serves as a coordination point for phosphoenolpyruvate. The active-site Proton acceptor is Asp306. Phosphoenolpyruvate is bound by residues Arg337, Arg379, and Lys405.

Belongs to the EPSP synthase family. In terms of assembly, monomer.

The protein resides in the cytoplasm. The catalysed reaction is 3-phosphoshikimate + phosphoenolpyruvate = 5-O-(1-carboxyvinyl)-3-phosphoshikimate + phosphate. The protein operates within metabolic intermediate biosynthesis; chorismate biosynthesis; chorismate from D-erythrose 4-phosphate and phosphoenolpyruvate: step 6/7. Its function is as follows. Catalyzes the transfer of the enolpyruvyl moiety of phosphoenolpyruvate (PEP) to the 5-hydroxyl of shikimate-3-phosphate (S3P) to produce enolpyruvyl shikimate-3-phosphate and inorganic phosphate. The polypeptide is 3-phosphoshikimate 1-carboxyvinyltransferase (Clostridium perfringens (strain 13 / Type A)).